A 485-amino-acid chain; its full sequence is Ribulose bisphosphate carboxylase large chain 2 (485 aa).

2 residues coordinate substrate: N124 and T174. K176 functions as the Proton acceptor in the catalytic mechanism. K178 contributes to the substrate binding site. Residues K202, D204, and E205 each contribute to the Mg(2+) site. Residue K202 is modified to N6-carboxylysine. Catalysis depends on H294, which acts as the Proton acceptor. Residues R295, H327, and S379 each coordinate substrate.

The protein belongs to the RuBisCO large chain family. Type I subfamily. Heterohexadecamer of 8 large chains and 8 small chains. Mg(2+) is required as a cofactor.

It carries out the reaction 2 (2R)-3-phosphoglycerate + 2 H(+) = D-ribulose 1,5-bisphosphate + CO2 + H2O. The enzyme catalyses D-ribulose 1,5-bisphosphate + O2 = 2-phosphoglycolate + (2R)-3-phosphoglycerate + 2 H(+). Its function is as follows. RuBisCO catalyzes two reactions: the carboxylation of D-ribulose 1,5-bisphosphate, the primary event in carbon dioxide fixation, as well as the oxidative fragmentation of the pentose substrate. Both reactions occur simultaneously and in competition at the same active site. This chain is Ribulose bisphosphate carboxylase large chain 2, found in Rhodopseudomonas palustris (strain BisB5).